The chain runs to 556 residues: Urocanate hydratase (556 aa).

NAD(+)-binding positions include 52–53 (GG), Gln130, 176–178 (GMG), Glu196, Arg201, 242–243 (NA), 263–267 (QTSAH), 273–274 (YL), and Tyr322. Cys410 is an active-site residue. Gly492 provides a ligand contact to NAD(+).

It belongs to the urocanase family. NAD(+) is required as a cofactor.

The protein localises to the cytoplasm. The enzyme catalyses 4-imidazolone-5-propanoate = trans-urocanate + H2O. It participates in amino-acid degradation; L-histidine degradation into L-glutamate; N-formimidoyl-L-glutamate from L-histidine: step 2/3. In terms of biological role, catalyzes the conversion of urocanate to 4-imidazolone-5-propionate. This is Urocanate hydratase from Shewanella oneidensis (strain ATCC 700550 / JCM 31522 / CIP 106686 / LMG 19005 / NCIMB 14063 / MR-1).